Here is a 280-residue protein sequence, read N- to C-terminus: 4-diphosphocytidyl-2-C-methyl-D-erythritol kinase (280 aa).

Lysine 11 is an active-site residue. Residue 95 to 105 (PVAAGLGGGSS) participates in ATP binding. Aspartate 137 is an active-site residue.

This sequence belongs to the GHMP kinase family. IspE subfamily.

The enzyme catalyses 4-CDP-2-C-methyl-D-erythritol + ATP = 4-CDP-2-C-methyl-D-erythritol 2-phosphate + ADP + H(+). It functions in the pathway isoprenoid biosynthesis; isopentenyl diphosphate biosynthesis via DXP pathway; isopentenyl diphosphate from 1-deoxy-D-xylulose 5-phosphate: step 3/6. Functionally, catalyzes the phosphorylation of the position 2 hydroxy group of 4-diphosphocytidyl-2C-methyl-D-erythritol. The polypeptide is 4-diphosphocytidyl-2-C-methyl-D-erythritol kinase (Pelobacter propionicus (strain DSM 2379 / NBRC 103807 / OttBd1)).